A 144-amino-acid chain; its full sequence is Large ribosomal subunit protein uL15 (144 aa).

A disordered region spans residues 1 to 48 (MQLNNLKPADGSKHAKRRVGRGIGSGLGKTAGRGHKGQKSRSGGFHKV). Residues 21-31 (RGIGSGLGKTA) show a composition bias toward gly residues.

It belongs to the universal ribosomal protein uL15 family. In terms of assembly, part of the 50S ribosomal subunit.

In terms of biological role, binds to the 23S rRNA. The chain is Large ribosomal subunit protein uL15 from Cupriavidus metallidurans (strain ATCC 43123 / DSM 2839 / NBRC 102507 / CH34) (Ralstonia metallidurans).